A 278-amino-acid polypeptide reads, in one-letter code: Pantothenate synthetase (278 aa).

26–33 (MGNLHEGH) is a binding site for ATP. Catalysis depends on H33, which acts as the Proton donor. Q57 contributes to the (R)-pantoate binding site. Q57 contacts beta-alanine. 144–147 (GKKD) contacts ATP. Residue Q150 coordinates (R)-pantoate. ATP contacts are provided by residues G173 and 181 to 184 (LSSR).

Belongs to the pantothenate synthetase family. As to quaternary structure, homodimer.

Its subcellular location is the cytoplasm. It catalyses the reaction (R)-pantoate + beta-alanine + ATP = (R)-pantothenate + AMP + diphosphate + H(+). It functions in the pathway cofactor biosynthesis; (R)-pantothenate biosynthesis; (R)-pantothenate from (R)-pantoate and beta-alanine: step 1/1. Its function is as follows. Catalyzes the condensation of pantoate with beta-alanine in an ATP-dependent reaction via a pantoyl-adenylate intermediate. This Neisseria meningitidis serogroup C / serotype 2a (strain ATCC 700532 / DSM 15464 / FAM18) protein is Pantothenate synthetase.